Here is a 152-residue protein sequence, read N- to C-terminus: Ribosome maturation factor RimP (152 aa).

The protein belongs to the RimP family.

Its subcellular location is the cytoplasm. Required for maturation of 30S ribosomal subunits. The sequence is that of Ribosome maturation factor RimP from Fervidobacterium nodosum (strain ATCC 35602 / DSM 5306 / Rt17-B1).